The following is a 170-amino-acid chain: Macro domain-containing protein DR_2288 (170 aa).

The region spanning 1–170 (MPLELVQGDI…HVFERALAQL (170 aa)) is the Macro domain.

This sequence belongs to the MacroD-type family.

The protein is Macro domain-containing protein DR_2288 of Deinococcus radiodurans (strain ATCC 13939 / DSM 20539 / JCM 16871 / CCUG 27074 / LMG 4051 / NBRC 15346 / NCIMB 9279 / VKM B-1422 / R1).